Here is a 460-residue protein sequence, read N- to C-terminus: UDP-N-acetylmuramoylalanine--D-glutamate ligase (460 aa).

An ATP-binding site is contributed by 120-126 (GSNGKTT).

This sequence belongs to the MurCDEF family.

The protein resides in the cytoplasm. It carries out the reaction UDP-N-acetyl-alpha-D-muramoyl-L-alanine + D-glutamate + ATP = UDP-N-acetyl-alpha-D-muramoyl-L-alanyl-D-glutamate + ADP + phosphate + H(+). The protein operates within cell wall biogenesis; peptidoglycan biosynthesis. Functionally, cell wall formation. Catalyzes the addition of glutamate to the nucleotide precursor UDP-N-acetylmuramoyl-L-alanine (UMA). This Lactobacillus delbrueckii subsp. bulgaricus (strain ATCC BAA-365 / Lb-18) protein is UDP-N-acetylmuramoylalanine--D-glutamate ligase.